The following is a 221-amino-acid chain: Large ribosomal subunit protein uL1 (221 aa).

The protein belongs to the universal ribosomal protein uL1 family. In terms of assembly, part of the 50S ribosomal subunit.

Its function is as follows. Probably involved in E site tRNA release. Binds directly to 23S rRNA. Protein L1 is also a translational repressor protein, it controls the translation of its operon by binding to its mRNA. The chain is Large ribosomal subunit protein uL1 from Sulfolobus acidocaldarius (strain ATCC 33909 / DSM 639 / JCM 8929 / NBRC 15157 / NCIMB 11770).